The chain runs to 187 residues: UPF0167 protein MT2352 (187 aa).

Belongs to the UPF0167 family.

The chain is UPF0167 protein MT2352 from Mycobacterium tuberculosis (strain CDC 1551 / Oshkosh).